A 225-amino-acid chain; its full sequence is MNNWTEALGEEKQQPYFQHILQQVHQERMNGVTVFPPQKEVFSAFALTEFKDVKVVILGQDPYHGPNQAHGLAFSVKPPVAPPPSLVNMYKELAQDVEGFQIPNHGYLVDWAKQGVLLLNTVLTVRQGQAHSHANFGWEIFTDKVIAQLNQHRENLVFLLWGSHAQKKGQFIDRSRHCVLTAPHPSPLSAYRGFFGCKHFSKTNRYLLSKGIAPINWQLRLEIDY.

The active-site Proton acceptor is Asp61.

The protein belongs to the uracil-DNA glycosylase (UDG) superfamily. UNG family.

Its subcellular location is the cytoplasm. It catalyses the reaction Hydrolyzes single-stranded DNA or mismatched double-stranded DNA and polynucleotides, releasing free uracil.. Its function is as follows. Excises uracil residues from the DNA which can arise as a result of misincorporation of dUMP residues by DNA polymerase or due to deamination of cytosine. The sequence is that of Uracil-DNA glycosylase from Actinobacillus pleuropneumoniae serotype 5b (strain L20).